A 286-amino-acid chain; its full sequence is Beta-lactamase SHV-2 (286 aa).

A signal peptide spans 1-21; the sequence is MRYIRLCIISLLATLPLAVHA. Catalysis depends on S66, which acts as the Acyl-ester intermediate. A disulfide bridge connects residues C73 and C119. E164 (proton acceptor) is an active-site residue. A substrate-binding site is contributed by 230–232; that stretch reads KTG.

The protein belongs to the class-A beta-lactamase family.

The catalysed reaction is a beta-lactam + H2O = a substituted beta-amino acid. Functionally, this enzyme hydrolyzes cefotaxime, ceftazidime and other broad spectrum cephalosporins. In Escherichia coli, this protein is Beta-lactamase SHV-2 (bla).